We begin with the raw amino-acid sequence, 427 residues long: 3-phosphoshikimate 1-carboxyvinyltransferase (427 aa).

3-phosphoshikimate is bound by residues Lys-20, Ser-21, and Arg-25. Lys-20 serves as a coordination point for phosphoenolpyruvate. The phosphoenolpyruvate site is built by Gly-92 and Arg-120. 3-phosphoshikimate contacts are provided by Ser-166, Gln-168, Asp-312, and Lys-339. Phosphoenolpyruvate is bound at residue Gln-168. The active-site Proton acceptor is Asp-312. Phosphoenolpyruvate contacts are provided by Arg-343 and Arg-385.

It belongs to the EPSP synthase family. Monomer.

Its subcellular location is the cytoplasm. It catalyses the reaction 3-phosphoshikimate + phosphoenolpyruvate = 5-O-(1-carboxyvinyl)-3-phosphoshikimate + phosphate. Its pathway is metabolic intermediate biosynthesis; chorismate biosynthesis; chorismate from D-erythrose 4-phosphate and phosphoenolpyruvate: step 6/7. Functionally, catalyzes the transfer of the enolpyruvyl moiety of phosphoenolpyruvate (PEP) to the 5-hydroxyl of shikimate-3-phosphate (S3P) to produce enolpyruvyl shikimate-3-phosphate and inorganic phosphate. This is 3-phosphoshikimate 1-carboxyvinyltransferase from Streptococcus equi subsp. equi (strain 4047).